The sequence spans 241 residues: DnaJ homolog subfamily B member 6 (241 aa).

Residues 2–146 (VDYYEVLGVQ…TGSFFSAFSG (145 aa)) form an interaction with HSP70 region. Positions 3-69 (DYYEVLGVQR…KKRDIYDKYG (67 aa)) constitute a J domain. The interaction with KRT18 stretch occupies residues 119–241 (FEDFFGNRRG…KEQLLRLDNK (123 aa)). At arginine 135 the chain carries Omega-N-methylarginine.

Homooligomer. Interacts with BAG3, HSPB8 and STUB1. Interacts with ALKBH1. Interacts with HSP70, KRT18 and PTTG.

It localises to the cytoplasm. Its subcellular location is the perinuclear region. The protein localises to the nucleus. The protein resides in the myofibril. It is found in the sarcomere. It localises to the z line. Functionally, has a stimulatory effect on the ATPase activity of HSP70 in a dose-dependent and time-dependent manner and hence acts as a co-chaperone of HSP70. Plays an indispensable role in the organization of KRT8/KRT18 filaments. Acts as an endogenous molecular chaperone for neuronal proteins including huntingtin. Suppresses aggregation and toxicity of polyglutamine-containing, aggregation-prone proteins. Also reduces cellular toxicity and caspase-3 activity. This chain is DnaJ homolog subfamily B member 6, found in Macaca fascicularis (Crab-eating macaque).